Reading from the N-terminus, the 724-residue chain is Pediocin PA-1 transport/processing ATP-binding protein PedD (724 aa).

One can recognise a Peptidase C39 domain in the interval 13–140 (QVDENDCGLA…KEWTQIAIII (128 aa)). Residue Cys-19 is part of the active site. The next 6 membrane-spanning stretches (helical) occupy residues 170-190 (IGLIITAAAITTLISIAGAYF), 207-227 (LSLVAIGLIVAYAFQAIINYI), 284-304 (TTLTLFLDMWILLAVGLFLAY), 307-327 (INLFLCSLVVVPIYISIVWLF), 396-416 (IKAATKLILTIVILWWGTFFV), and 426-446 (LLTYNALLAYFLTPLENIINL). In terms of domain architecture, ABC transmembrane type-1 spans 170–452 (IGLIITAAAI…IINLQPKLQA (283 aa)). Residues 486 to 722 (IEVNHVSFNY…NGYYARLIHN (237 aa)) form the ABC transporter domain. 519 to 526 (GMSGSGKT) provides a ligand contact to ATP.

It belongs to the ABC transporter superfamily. Pediocin PA-1 exporter (TC 3.A.1.112.2) family.

It localises to the cell membrane. Its function is as follows. Involved in the export process of the bacteriocin pediocin PA-1/AcH. Is also essential for pediocin production. In Pediococcus acidilactici, this protein is Pediocin PA-1 transport/processing ATP-binding protein PedD (pedD).